The sequence spans 43 residues: Protein PsbN (43 aa).

A helical membrane pass occupies residues 5-27 (TVFSIFISCLLLSLTGYSLYTAF).

The protein belongs to the PsbN family.

The protein localises to the plastid. It is found in the chloroplast thylakoid membrane. In terms of biological role, may play a role in photosystem I and II biogenesis. This is Protein PsbN from Chlorokybus atmophyticus (Soil alga).